The sequence spans 130 residues: Fluoride-specific ion channel FluC (130 aa).

4 helical membrane-spanning segments follow: residues 7–27 (VLAI…LGLW), 36–56 (LGTL…VAVF), 69–89 (ALIT…AEVV), and 99–119 (LGFG…LAGI). 2 residues coordinate Na(+): Gly-76 and Thr-79.

It belongs to the fluoride channel Fluc/FEX (TC 1.A.43) family.

The protein resides in the cell inner membrane. It catalyses the reaction fluoride(in) = fluoride(out). Na(+) is not transported, but it plays an essential structural role and its presence is essential for fluoride channel function. Its function is as follows. Fluoride-specific ion channel. Important for reducing fluoride concentration in the cell, thus reducing its toxicity. The chain is Fluoride-specific ion channel FluC from Albidiferax ferrireducens (strain ATCC BAA-621 / DSM 15236 / T118) (Rhodoferax ferrireducens).